The primary structure comprises 166 residues: Large ribosomal subunit protein uL10 (166 aa).

Belongs to the universal ribosomal protein uL10 family. As to quaternary structure, part of the ribosomal stalk of the 50S ribosomal subunit. The N-terminus interacts with L11 and the large rRNA to form the base of the stalk. The C-terminus forms an elongated spine to which L12 dimers bind in a sequential fashion forming a multimeric L10(L12)X complex.

Its function is as follows. Forms part of the ribosomal stalk, playing a central role in the interaction of the ribosome with GTP-bound translation factors. The polypeptide is Large ribosomal subunit protein uL10 (Limosilactobacillus reuteri (strain DSM 20016) (Lactobacillus reuteri)).